The primary structure comprises 255 residues: NAD kinase (255 aa).

The active-site Proton acceptor is aspartate 44. Residues 44 to 45 (DG), histidine 49, 114 to 115 (NE), aspartate 144, alanine 152, 155 to 160 (SAYNLS), and glutamine 216 each bind NAD(+).

Belongs to the NAD kinase family. A divalent metal cation serves as cofactor.

It localises to the cytoplasm. It catalyses the reaction NAD(+) + ATP = ADP + NADP(+) + H(+). In terms of biological role, involved in the regulation of the intracellular balance of NAD and NADP, and is a key enzyme in the biosynthesis of NADP. Catalyzes specifically the phosphorylation on 2'-hydroxyl of the adenosine moiety of NAD to yield NADP. The polypeptide is NAD kinase (Rickettsia africae (strain ESF-5)).